The sequence spans 203 residues: Akirin-2 (203 aa).

2 positions are modified to phosphoserine: S18 and S21. The Nuclear localization signal motif lies at 22 to 27 (PKRRRC). Phosphoserine is present on S57. The SYVS motif signature appears at 200–203 (SYVS).

This sequence belongs to the akirin family. In terms of assembly, homodimer. Interacts with IPO9; the interaction is direct. Associates with 20S and 26S proteasomes. Interacts with SMARCD1; promoting SWI/SNF complex recruitment. Interacts with NFKBIZ. Interacts with YWHAB. Post-translationally, polyubiquitinated. Polyubiquitination is dependent of UBR5 that extends pre-ubiquitinated AKIRIN2. Widely expressed. Most abundant in the lung, followed by the skeletal muscle, heart, liver, fat, thymus, lymph node, small intestine, kidney and spleen. In skeletal muscle, expressed at higher level in fast extensor digitorum longus (EDL) and longissimus lumborum (LL) muscles than in slow soleus (SOL) muscles.

It is found in the nucleus. Its subcellular location is the cytoplasm. The protein localises to the membrane. Functionally, molecular adapter that acts as a bridge between a variety of multiprotein complexes, and which is involved in embryonic development, immunity, myogenesis and brain development. Plays a key role in nuclear protein degradation by promoting import of proteasomes into the nucleus: directly binds to fully assembled 20S proteasomes at one end and to nuclear import receptor IPO9 at the other end, bridging them together and mediating the import of pre-assembled proteasome complexes through the nuclear pore. Involved in innate immunity by regulating the production of interleukin-6 (IL6) downstream of Toll-like receptor (TLR): acts by bridging the NF-kappa-B inhibitor NFKBIZ and the SWI/SNF complex, leading to promote induction of IL6. Also involved in adaptive immunity by promoting B-cell activation. Involved in brain development: required for the survival and proliferation of cerebral cortical progenitor cells. Involved in myogenesis: required for skeletal muscle formation and skeletal development, possibly by regulating expression of muscle differentiation factors. The sequence is that of Akirin-2 from Sus scrofa (Pig).